A 419-amino-acid polypeptide reads, in one-letter code: Creatine kinase S-type, mitochondrial (419 aa).

A mitochondrion-targeting transit peptide spans 1 to 39 (MASAFSKLLTGRNASLLFTTLGTSALTTGYLLNRQKVSA). The interval 40–64 (DAREQHKLFPPSADYPDLRKHNNCM) is cardiolipin-binding. Positions 46–132 (KLFPPSADYP…FDPVIKLRHN (87 aa)) constitute a Phosphagen kinase N-terminal domain. Residues 159-401 (YVLSSRVRTG…NYLVDCEKKL (243 aa)) enclose the Phosphagen kinase C-terminal domain. ATP contacts are provided by residues 162 to 166 (SSRVR) and His-225. Tyr-255 carries the phosphotyrosine modification. ATP is bound by residues Arg-270, Arg-326, 354 to 359 (RGTGGV), and Asp-369. Residue Thr-356 is modified to Phosphothreonine.

This sequence belongs to the ATP:guanido phosphotransferase family. Exists as an octamer composed of four CKMT2 homodimers. As to expression, sarcomere-specific. Found only in heart and skeletal muscles.

It localises to the mitochondrion inner membrane. It catalyses the reaction creatine + ATP = N-phosphocreatine + ADP + H(+). Its function is as follows. Reversibly catalyzes the transfer of phosphate between ATP and various phosphogens (e.g. creatine phosphate). Creatine kinase isoenzymes play a central role in energy transduction in tissues with large, fluctuating energy demands, such as skeletal muscle, heart, brain and spermatozoa. This is Creatine kinase S-type, mitochondrial (Ckmt2) from Rattus norvegicus (Rat).